The chain runs to 168 residues: Disulfide bond formation protein B 1 (168 aa).

At 1–14 (MNELTSRLNRERRF) the chain is on the cytoplasmic side. A helical transmembrane segment spans residues 15–31 (LVLLGVICLALIGGALY). Residues 32-49 (MQVVLGEAPCPLCILQRY) are Periplasmic-facing. C41 and C44 are oxidised to a cystine. Residues 50–65 (ALLFIAIFAFIAAAMP) form a helical membrane-spanning segment. At 66–72 (GRKSLTF) the chain is on the cytoplasmic side. The chain crosses the membrane as a helical span at residues 73–89 (FEVLVVLSAIGGIVAAG). Topologically, residues 90–144 (NHVYILANPMVSCGIDTLQPIVDDLPLAKLWPLAFQVDGFCSTPYPPILGLSLAQ) are periplasmic. Cysteines 102 and 130 form a disulfide. Residues 145–163 (WALVAFVLTTVLVPLGIYR) form a helical membrane-spanning segment. The Cytoplasmic segment spans residues 164 to 168 (NRRRG).

The protein belongs to the DsbB family.

It is found in the cell inner membrane. In terms of biological role, required for disulfide bond formation in some periplasmic proteins. Acts by oxidizing the DsbA protein. The protein is Disulfide bond formation protein B 1 of Pseudomonas entomophila (strain L48).